A 130-amino-acid polypeptide reads, in one-letter code: uncharacterized protein (130 aa).

The N-terminal stretch at 1 to 19 (MLAPLFLCCLRNLFRKLIS) is a signal peptide.

It is found in the secreted. This is an uncharacterized protein from Homo sapiens (Human).